The chain runs to 280 residues: 2,3,4,5-tetrahydropyridine-2,6-dicarboxylate N-succinyltransferase (280 aa).

Residues Arg-109 and Asp-146 each coordinate substrate.

The protein belongs to the transferase hexapeptide repeat family. Homotrimer.

The protein resides in the cytoplasm. The catalysed reaction is (S)-2,3,4,5-tetrahydrodipicolinate + succinyl-CoA + H2O = (S)-2-succinylamino-6-oxoheptanedioate + CoA. The protein operates within amino-acid biosynthesis; L-lysine biosynthesis via DAP pathway; LL-2,6-diaminopimelate from (S)-tetrahydrodipicolinate (succinylase route): step 1/3. In Blochmanniella floridana, this protein is 2,3,4,5-tetrahydropyridine-2,6-dicarboxylate N-succinyltransferase.